Reading from the N-terminus, the 406-residue chain is MNKPVAPNSYKTGPDEEGMFGIFGGRFVAETLMPLILELQQAYETAKNDPEFKAELNALSTFYAGRPSKLYYAEGLSKHLGGAKIYFKREDLNHTGSHKINNCLGQILLAKRMGKTRIIAETGAGQHGVASATVAARFGLPCIVYVGASDVERQKPNVFRMKLLGAEVKPVSAGNGTLKDAMNEALRDWVTNVEDTYYLIGTAAGPHPYPELVRDFQSVIGTEARQQILEQEGRLPDVIVAAVGGGSNAIGLFHPFLDDASVKIVGVEAGGRGLEGEEHCASMSAGRPGVLHGNRTYLLQNADGQILEGHSVSAGLDYPGVGPEHSWLKDSGRVDYVPILDNEALDAFQLCTRTEGIIPALESAHAIAQAVKMAPTMGKDKVMIVNLSGRGDKDVHTVGKLLGMDI.

Lys99 bears the N6-(pyridoxal phosphate)lysine mark.

This sequence belongs to the TrpB family. In terms of assembly, tetramer of two alpha and two beta chains. It depends on pyridoxal 5'-phosphate as a cofactor.

It catalyses the reaction (1S,2R)-1-C-(indol-3-yl)glycerol 3-phosphate + L-serine = D-glyceraldehyde 3-phosphate + L-tryptophan + H2O. The protein operates within amino-acid biosynthesis; L-tryptophan biosynthesis; L-tryptophan from chorismate: step 5/5. The beta subunit is responsible for the synthesis of L-tryptophan from indole and L-serine. The chain is Tryptophan synthase beta chain from Brucella melitensis biotype 2 (strain ATCC 23457).